Here is a 340-residue protein sequence, read N- to C-terminus: S-adenosylmethionine:tRNA ribosyltransferase-isomerase (340 aa).

This sequence belongs to the QueA family. In terms of assembly, monomer.

The protein resides in the cytoplasm. It catalyses the reaction 7-aminomethyl-7-carbaguanosine(34) in tRNA + S-adenosyl-L-methionine = epoxyqueuosine(34) in tRNA + adenine + L-methionine + 2 H(+). It participates in tRNA modification; tRNA-queuosine biosynthesis. Transfers and isomerizes the ribose moiety from AdoMet to the 7-aminomethyl group of 7-deazaguanine (preQ1-tRNA) to give epoxyqueuosine (oQ-tRNA). The sequence is that of S-adenosylmethionine:tRNA ribosyltransferase-isomerase from Campylobacter concisus (strain 13826).